The chain runs to 156 residues: ATP synthase subunit b (156 aa).

Residues 11 to 31 (AIAFILFVWFCMKYVWPPLMA) traverse the membrane as a helical segment.

This sequence belongs to the ATPase B chain family. In terms of assembly, F-type ATPases have 2 components, F(1) - the catalytic core - and F(0) - the membrane proton channel. F(1) has five subunits: alpha(3), beta(3), gamma(1), delta(1), epsilon(1). F(0) has three main subunits: a(1), b(2) and c(10-14). The alpha and beta chains form an alternating ring which encloses part of the gamma chain. F(1) is attached to F(0) by a central stalk formed by the gamma and epsilon chains, while a peripheral stalk is formed by the delta and b chains.

Its subcellular location is the cell inner membrane. Its function is as follows. F(1)F(0) ATP synthase produces ATP from ADP in the presence of a proton or sodium gradient. F-type ATPases consist of two structural domains, F(1) containing the extramembraneous catalytic core and F(0) containing the membrane proton channel, linked together by a central stalk and a peripheral stalk. During catalysis, ATP synthesis in the catalytic domain of F(1) is coupled via a rotary mechanism of the central stalk subunits to proton translocation. Component of the F(0) channel, it forms part of the peripheral stalk, linking F(1) to F(0). In Salmonella gallinarum (strain 287/91 / NCTC 13346), this protein is ATP synthase subunit b.